Reading from the N-terminus, the 224-residue chain is Orotidine 5'-phosphate decarboxylase (224 aa).

Residues aspartate 10, lysine 32, 59-68 (DLKLHDIPNT), threonine 115, arginine 175, glutamine 184, glycine 204, and arginine 205 contribute to the substrate site. Lysine 61 serves as the catalytic Proton donor.

This sequence belongs to the OMP decarboxylase family. Type 1 subfamily. As to quaternary structure, homodimer.

It carries out the reaction orotidine 5'-phosphate + H(+) = UMP + CO2. Its pathway is pyrimidine metabolism; UMP biosynthesis via de novo pathway; UMP from orotate: step 2/2. Catalyzes the decarboxylation of orotidine 5'-monophosphate (OMP) to uridine 5'-monophosphate (UMP). The sequence is that of Orotidine 5'-phosphate decarboxylase from Novosphingobium aromaticivorans (strain ATCC 700278 / DSM 12444 / CCUG 56034 / CIP 105152 / NBRC 16084 / F199).